The primary structure comprises 209 residues: Thiamine-phosphate synthase (209 aa).

4-amino-2-methyl-5-(diphosphooxymethyl)pyrimidine-binding positions include 38–42 (QYRAK) and N70. Mg(2+) contacts are provided by D71 and D90. Residue S109 participates in 4-amino-2-methyl-5-(diphosphooxymethyl)pyrimidine binding. Residue 135–137 (TST) participates in 2-[(2R,5Z)-2-carboxy-4-methylthiazol-5(2H)-ylidene]ethyl phosphate binding. K138 contacts 4-amino-2-methyl-5-(diphosphooxymethyl)pyrimidine. 2-[(2R,5Z)-2-carboxy-4-methylthiazol-5(2H)-ylidene]ethyl phosphate is bound by residues G165 and 185–186 (VS).

Belongs to the thiamine-phosphate synthase family. Requires Mg(2+) as cofactor.

The enzyme catalyses 2-[(2R,5Z)-2-carboxy-4-methylthiazol-5(2H)-ylidene]ethyl phosphate + 4-amino-2-methyl-5-(diphosphooxymethyl)pyrimidine + 2 H(+) = thiamine phosphate + CO2 + diphosphate. The catalysed reaction is 2-(2-carboxy-4-methylthiazol-5-yl)ethyl phosphate + 4-amino-2-methyl-5-(diphosphooxymethyl)pyrimidine + 2 H(+) = thiamine phosphate + CO2 + diphosphate. It carries out the reaction 4-methyl-5-(2-phosphooxyethyl)-thiazole + 4-amino-2-methyl-5-(diphosphooxymethyl)pyrimidine + H(+) = thiamine phosphate + diphosphate. It functions in the pathway cofactor biosynthesis; thiamine diphosphate biosynthesis; thiamine phosphate from 4-amino-2-methyl-5-diphosphomethylpyrimidine and 4-methyl-5-(2-phosphoethyl)-thiazole: step 1/1. Functionally, condenses 4-methyl-5-(beta-hydroxyethyl)thiazole monophosphate (THZ-P) and 2-methyl-4-amino-5-hydroxymethyl pyrimidine pyrophosphate (HMP-PP) to form thiamine monophosphate (TMP). The chain is Thiamine-phosphate synthase from Persephonella marina (strain DSM 14350 / EX-H1).